Here is a 98-residue protein sequence, read N- to C-terminus: Homeobox protein Ht-En (98 aa).

The homeobox DNA-binding region spans 3–62 (EKRPRTAFTGDQLARLKREFSENKYLTEQRRTCLAKELNLNESQIKIWFQNKRAKMKKAS). The segment at 79-98 (NHSSSSSSSSSSSSSIFLLA) is disordered. The segment covering 81–98 (SSSSSSSSSSSSSIFLLA) has biased composition (low complexity).

It belongs to the engrailed homeobox family. Phosphorylated in the Ser-rich domain.

The protein localises to the nucleus. In terms of biological role, this protein specifies the body segmentation pattern. In Helobdella triserialis (Leech), this protein is Homeobox protein Ht-En (HT-EN).